Here is a 191-residue protein sequence, read N- to C-terminus: Polysulfide reductase chain B (191 aa).

4Fe-4S ferredoxin-type domains follow at residues tyrosine 5–valine 34, glycine 50–aspartate 83, and glycine 84–valine 113. The [4Fe-4S] cluster site is built by cysteine 14, cysteine 17, cysteine 20, cysteine 24, cysteine 61, cysteine 64, cysteine 69, cysteine 73, cysteine 93, cysteine 96, cysteine 99, cysteine 103, cysteine 120, cysteine 123, cysteine 136, and cysteine 140.

As to quaternary structure, functional polysulfide reductase is made up of three different (A, B, and C) subunits.

In terms of biological role, component of the phosphorylative electron transport system with polysulfide as the terminal acceptor. The sequence is that of Polysulfide reductase chain B (psrB) from Wolinella succinogenes (strain ATCC 29543 / DSM 1740 / CCUG 13145 / JCM 31913 / LMG 7466 / NCTC 11488 / FDC 602W) (Vibrio succinogenes).